The following is a 212-amino-acid chain: Ribonuclease HII (212 aa).

In terms of domain architecture, RNase H type-2 spans 17–211 (RVLAGIDEAG…VLELLDLTDS (195 aa)). 3 residues coordinate a divalent metal cation: aspartate 23, glutamate 24, and aspartate 120.

This sequence belongs to the RNase HII family. The cofactor is Mn(2+). It depends on Mg(2+) as a cofactor.

Its subcellular location is the cytoplasm. It catalyses the reaction Endonucleolytic cleavage to 5'-phosphomonoester.. Functionally, endonuclease that specifically degrades the RNA of RNA-DNA hybrids. The protein is Ribonuclease HII of Chloroflexus aggregans (strain MD-66 / DSM 9485).